The sequence spans 420 residues: Protein PEA2 (420 aa).

The segment covering 132-153 has biased composition (polar residues); it reads LTKENNNSFPNSKRARSSTNMG. Residues 132–169 form a disordered region; sequence LTKENNNSFPNSKRARSSTNMGGTDKFNKGAYHTDKAD. A compositionally biased stretch (basic and acidic residues) spans 157-169; sequence KFNKGAYHTDKAD. Ser-230 carries the phosphoserine modification. The disordered stretch occupies residues 323-363; that stretch reads NSSRHNFGMSSPASSPVTWDPSSPSSVGSPTSGSGSRSLSI. The span at 325–339 shows a compositional bias: polar residues; that stretch reads SRHNFGMSSPASSPV. Positions 343-362 are enriched in low complexity; sequence PSSPSSVGSPTSGSGSRSLS.

In terms of biological role, localized to sites of polarized growth and is required for efficient mating and bipolar budding. The chain is Protein PEA2 (PEA2) from Saccharomyces cerevisiae (strain ATCC 204508 / S288c) (Baker's yeast).